Consider the following 347-residue polypeptide: Heat-inducible transcription repressor HrcA (347 aa).

The protein belongs to the HrcA family.

In terms of biological role, negative regulator of class I heat shock genes (grpE-dnaK-dnaJ and groELS operons). Prevents heat-shock induction of these operons. This Enterococcus faecalis (strain ATCC 700802 / V583) protein is Heat-inducible transcription repressor HrcA.